The sequence spans 164 residues: Photosystem II extrinsic protein V (164 aa).

Residues 1–27 form the signal peptide; it reads MIPNRKIQLSLFAVIIVFETLLNQVYA. 4 residues coordinate heme c: C64, C67, H68, and M131.

The protein belongs to the cytochrome c family. PsbV subfamily. In terms of assembly, PSII is composed of 1 copy each of membrane proteins PsbA, PsbB, PsbC, PsbD, PsbE, PsbF, PsbH, PsbI, PsbJ, PsbK, PsbL, PsbM, PsbT, PsbY, PsbZ, Psb30/Ycf12, at least 3 peripheral proteins of the oxygen-evolving complex and a large number of cofactors. It forms dimeric complexes. The extrinsic subunits in red algae are PsbO (OEC33), PsbQ', cytochrome c-550 and PsbU. The cofactor is heme c.

It is found in the plastid. Its subcellular location is the chloroplast thylakoid membrane. Functionally, one of the extrinsic, lumenal subunits of photosystem II (PSII). PSII is a light-driven water plastoquinone oxidoreductase, using light energy to abstract electrons from H(2)O, generating a proton gradient subsequently used for ATP formation. The extrinsic proteins stabilize the structure of photosystem II oxygen-evolving complex (OEC), the ion environment of oxygen evolution and protect the OEC against heat-induced inactivation. This chain is Photosystem II extrinsic protein V, found in Gracilaria tenuistipitata var. liui (Red alga).